The following is a 275-amino-acid chain: Phosphate import ATP-binding protein PstB (275 aa).

One can recognise an ABC transporter domain in the interval 29–270; sequence LEIKDLDLYY…PNKKKTEDYI (242 aa). 61–68 contacts ATP; the sequence is GPSGCGKS.

Belongs to the ABC transporter superfamily. Phosphate importer (TC 3.A.1.7) family. As to quaternary structure, the complex is composed of two ATP-binding proteins (PstB), two transmembrane proteins (PstC and PstA) and a solute-binding protein (PstS).

Its subcellular location is the cell inner membrane. The catalysed reaction is phosphate(out) + ATP + H2O = ADP + 2 phosphate(in) + H(+). Its function is as follows. Part of the ABC transporter complex PstSACB involved in phosphate import. Responsible for energy coupling to the transport system. The polypeptide is Phosphate import ATP-binding protein PstB (Pseudoalteromonas translucida (strain TAC 125)).